The primary structure comprises 518 residues: DHTALDLIIKSLKSPTMVCEGTHFDGKIPHTFVIFGASGDLAKKKIYPKLWWFYRDDLLPKLTKFCGYARSMLTVDSIKEQCLPYMKVQSHEQKKYEEFWALNEYVSGRYDGRTGFELLNQQLELMENKNKANRIFYLALPPSVFEEVTVNIKQICMSVCGWNRVIIEKPFGRDDASSQALSDHLAALFHEDQLYRIDHYLGKEMVQNLMTIRFGNKILSSTWNRENIASVLITFKEPFGTQGRGGYFDEFGIIRDVMQNHLLQILSLVAMEKPVSCHPDDIRDEKVKVLKSIETLTLKDMVLGQYLGNPQGTTDDARTGYVEDPTVSDDSNTPTYALGVLKINNERWQGVPFILRCGKRLNERKAEVRIQYQDVPGDIFEGNTKRNELVIRVQPGEALYFKMMTKSPGITFDIEETELDLTYEHRYKDSYLPDAYERLILDVFCGSQMHFVRSDQLREAWRIFTPILHQIEREHIRPITYQYGSRGPKEADRMCEENNFKYSGSYKWHGGKAATSNL.

NADP(+)-binding positions include 36-43 (GASGDLAK), Arg70, and Lys169. D-glucose 6-phosphate-binding positions include Lys169, 199 to 203 (HYLGK), Glu237, and Asp256. His261 acts as the Proton acceptor in catalysis. Arg356 is a binding site for NADP(+). Positions 359 and 364 each coordinate D-glucose 6-phosphate. The NADP(+) site is built by Lys365, Arg369, and Arg392. Gln394 serves as a coordination point for D-glucose 6-phosphate. Residues 400–402 (YFK), 420–422 (DLT), Arg486, Tyr502, and Trp508 contribute to the NADP(+) site.

Belongs to the glucose-6-phosphate dehydrogenase family.

The protein localises to the cytoplasm. The protein resides in the cytosol. The enzyme catalyses D-glucose 6-phosphate + NADP(+) = 6-phospho-D-glucono-1,5-lactone + NADPH + H(+). Its pathway is carbohydrate degradation; pentose phosphate pathway; D-ribulose 5-phosphate from D-glucose 6-phosphate (oxidative stage): step 1/3. Its function is as follows. Cytosolic glucose-6-phosphate dehydrogenase that catalyzes the first and rate-limiting step of the oxidative branch within the pentose phosphate pathway/shunt, an alternative route to glycolysis for the dissimilation of carbohydrates and a major source of reducing power and metabolic intermediates for fatty acid and nucleic acid biosynthetic processes. The polypeptide is Glucose-6-phosphate 1-dehydrogenase (Zw) (Drosophila yakuba (Fruit fly)).